The primary structure comprises 1266 residues: TBC1 domain family member 9 (1266 aa).

2 GRAM domains span residues 146–213 (VKFH…EKNA) and 293–361 (ERYR…EKAD). The interval 415-456 (SYNSSDDEVYSRPSSLVSSSPQRSTSSDADGERQFNLNGNSV) is disordered. Over residues 425–441 (SRPSSLVSSSPQRSTSS) the composition is skewed to low complexity. The Rab-GAP TBC domain occupies 515–702 (GIPESMRGEL…VVVDCFFYEG (188 aa)). The EF-hand domain occupies 886–921 (HSDVLASRLFQLLDENGDSLINFREFVSGLSAACHG). 2 disordered regions span residues 1075-1095 (AKEGGSGGSGPSCHQGIPGVL) and 1132-1164 (DIKLEDSSPRDNGACSSMLISDDDTKDDSSMSS).

Its function is as follows. May act as a GTPase-activating protein for Rab family protein(s). The sequence is that of TBC1 domain family member 9 (TBC1D9) from Homo sapiens (Human).